A 546-amino-acid polypeptide reads, in one-letter code: CTP synthase (546 aa).

The interval 1–265 (MTKYVFVTGG…DEIVCHKLNI (265 aa)) is amidoligase domain. A CTP-binding site is contributed by Ser-13. Ser-13 lines the UTP pocket. ATP contacts are provided by residues 14–19 (SLGKGI) and Asp-71. Mg(2+) contacts are provided by Asp-71 and Glu-139. CTP-binding positions include 146–148 (DIE), 186–191 (KTKPTQ), and Lys-222. UTP is bound by residues 186 to 191 (KTKPTQ) and Lys-222. The region spanning 290 to 543 (NIAFVGKYVD…VRAALAHQQK (254 aa)) is the Glutamine amidotransferase type-1 domain. An L-glutamine-binding site is contributed by Gly-351. The Nucleophile; for glutamine hydrolysis role is filled by Cys-378. Residues 379-382 (LGMQ), Glu-402, and Arg-469 contribute to the L-glutamine site. Residues His-516 and Glu-518 contribute to the active site.

Belongs to the CTP synthase family. In terms of assembly, homotetramer.

It catalyses the reaction UTP + L-glutamine + ATP + H2O = CTP + L-glutamate + ADP + phosphate + 2 H(+). The catalysed reaction is L-glutamine + H2O = L-glutamate + NH4(+). The enzyme catalyses UTP + NH4(+) + ATP = CTP + ADP + phosphate + 2 H(+). It functions in the pathway pyrimidine metabolism; CTP biosynthesis via de novo pathway; CTP from UDP: step 2/2. Allosterically activated by GTP, when glutamine is the substrate; GTP has no effect on the reaction when ammonia is the substrate. The allosteric effector GTP functions by stabilizing the protein conformation that binds the tetrahedral intermediate(s) formed during glutamine hydrolysis. Inhibited by the product CTP, via allosteric rather than competitive inhibition. In terms of biological role, catalyzes the ATP-dependent amination of UTP to CTP with either L-glutamine or ammonia as the source of nitrogen. Regulates intracellular CTP levels through interactions with the four ribonucleotide triphosphates. The sequence is that of CTP synthase from Thiobacillus denitrificans (strain ATCC 25259 / T1).